A 454-amino-acid polypeptide reads, in one-letter code: Tubulin beta-3 chain (454 aa).

Residues Gln-11, Glu-75, Ser-144, Gly-148, Thr-149, Gly-150, Asn-210, and Asn-232 each contribute to the GTP site. Mg(2+) is bound at residue Glu-75. Residues 435-454 (TADDEFDPEVNQEEVEGDCI) form a disordered region.

Belongs to the tubulin family. As to quaternary structure, dimer of alpha and beta chains. A typical microtubule is a hollow water-filled tube with an outer diameter of 25 nm and an inner diameter of 15 nM. Alpha-beta heterodimers associate head-to-tail to form protofilaments running lengthwise along the microtubule wall with the beta-tubulin subunit facing the microtubule plus end conferring a structural polarity. Microtubules usually have 13 protofilaments but different protofilament numbers can be found in some organisms and specialized cells. It depends on Mg(2+) as a cofactor.

The protein localises to the cytoplasm. It localises to the cytoskeleton. Functionally, tubulin is the major constituent of microtubules, a cylinder consisting of laterally associated linear protofilaments composed of alpha- and beta-tubulin heterodimers. Microtubules grow by the addition of GTP-tubulin dimers to the microtubule end, where a stabilizing cap forms. Below the cap, tubulin dimers are in GDP-bound state, owing to GTPase activity of alpha-tubulin. In Drosophila melanogaster (Fruit fly), this protein is Tubulin beta-3 chain (betaTub60D).